We begin with the raw amino-acid sequence, 445 residues long: Phosphoglucosamine mutase (445 aa).

Catalysis depends on S101, which acts as the Phosphoserine intermediate. The Mg(2+) site is built by S101, D240, D242, and D244. S101 carries the post-translational modification Phosphoserine.

It belongs to the phosphohexose mutase family. The cofactor is Mg(2+). In terms of processing, activated by phosphorylation.

It catalyses the reaction alpha-D-glucosamine 1-phosphate = D-glucosamine 6-phosphate. Functionally, catalyzes the conversion of glucosamine-6-phosphate to glucosamine-1-phosphate. This is Phosphoglucosamine mutase from Azotobacter vinelandii (strain DJ / ATCC BAA-1303).